The primary structure comprises 154 residues: Endoribonuclease YbeY (154 aa).

Positions 117, 121, and 127 each coordinate Zn(2+).

Belongs to the endoribonuclease YbeY family. The cofactor is Zn(2+).

It localises to the cytoplasm. Single strand-specific metallo-endoribonuclease involved in late-stage 70S ribosome quality control and in maturation of the 3' terminus of the 16S rRNA. The chain is Endoribonuclease YbeY from Mycoplasma pneumoniae (strain ATCC 29342 / M129 / Subtype 1) (Mycoplasmoides pneumoniae).